Here is a 75-residue protein sequence, read N- to C-terminus: Small ribosomal subunit protein bS18 (75 aa).

This sequence belongs to the bacterial ribosomal protein bS18 family. In terms of assembly, part of the 30S ribosomal subunit. Forms a tight heterodimer with protein bS6.

Functionally, binds as a heterodimer with protein bS6 to the central domain of the 16S rRNA, where it helps stabilize the platform of the 30S subunit. This Buchnera aphidicola subsp. Baizongia pistaciae (strain Bp) protein is Small ribosomal subunit protein bS18.